We begin with the raw amino-acid sequence, 754 residues long: Phosphoribosylformylglycinamidine synthase subunit PurL (754 aa).

His52 is a catalytic residue. ATP-binding residues include Tyr55 and Lys95. Glu97 is a binding site for Mg(2+). Residues 98–101 and Arg120 contribute to the substrate site; that span reads SHNH. The active-site Proton acceptor is His99. A Mg(2+)-binding site is contributed by Asp121. A substrate-binding site is contributed by Gln244. Mg(2+) is bound at residue Asp272. Residue 316–318 coordinates substrate; the sequence is ESQ. 2 residues coordinate ATP: Asn504 and Gly541. Asn542 lines the Mg(2+) pocket. Residue Ser544 coordinates substrate.

It belongs to the FGAMS family. Monomer. Part of the FGAM synthase complex composed of 1 PurL, 1 PurQ and 2 PurS subunits.

It is found in the cytoplasm. It catalyses the reaction N(2)-formyl-N(1)-(5-phospho-beta-D-ribosyl)glycinamide + L-glutamine + ATP + H2O = 2-formamido-N(1)-(5-O-phospho-beta-D-ribosyl)acetamidine + L-glutamate + ADP + phosphate + H(+). It functions in the pathway purine metabolism; IMP biosynthesis via de novo pathway; 5-amino-1-(5-phospho-D-ribosyl)imidazole from N(2)-formyl-N(1)-(5-phospho-D-ribosyl)glycinamide: step 1/2. Functionally, part of the phosphoribosylformylglycinamidine synthase complex involved in the purines biosynthetic pathway. Catalyzes the ATP-dependent conversion of formylglycinamide ribonucleotide (FGAR) and glutamine to yield formylglycinamidine ribonucleotide (FGAM) and glutamate. The FGAM synthase complex is composed of three subunits. PurQ produces an ammonia molecule by converting glutamine to glutamate. PurL transfers the ammonia molecule to FGAR to form FGAM in an ATP-dependent manner. PurS interacts with PurQ and PurL and is thought to assist in the transfer of the ammonia molecule from PurQ to PurL. The polypeptide is Phosphoribosylformylglycinamidine synthase subunit PurL (Salinibacter ruber (strain DSM 13855 / M31)).